We begin with the raw amino-acid sequence, 293 residues long: Bifunctional protein FolD (293 aa).

NADP(+) is bound by residues 165–167 (GRS), Ser190, and Ile231.

This sequence belongs to the tetrahydrofolate dehydrogenase/cyclohydrolase family. Homodimer.

The enzyme catalyses (6R)-5,10-methylene-5,6,7,8-tetrahydrofolate + NADP(+) = (6R)-5,10-methenyltetrahydrofolate + NADPH. The catalysed reaction is (6R)-5,10-methenyltetrahydrofolate + H2O = (6R)-10-formyltetrahydrofolate + H(+). It participates in one-carbon metabolism; tetrahydrofolate interconversion. Catalyzes the oxidation of 5,10-methylenetetrahydrofolate to 5,10-methenyltetrahydrofolate and then the hydrolysis of 5,10-methenyltetrahydrofolate to 10-formyltetrahydrofolate. The sequence is that of Bifunctional protein FolD from Synechococcus sp. (strain WH7803).